The following is a 336-amino-acid chain: tRNA(Ile)-lysidine synthase (336 aa).

Residue serine 40–serine 45 participates in ATP binding.

This sequence belongs to the tRNA(Ile)-lysidine synthase family.

The protein localises to the cytoplasm. The enzyme catalyses cytidine(34) in tRNA(Ile2) + L-lysine + ATP = lysidine(34) in tRNA(Ile2) + AMP + diphosphate + H(+). Its function is as follows. Ligates lysine onto the cytidine present at position 34 of the AUA codon-specific tRNA(Ile) that contains the anticodon CAU, in an ATP-dependent manner. Cytidine is converted to lysidine, thus changing the amino acid specificity of the tRNA from methionine to isoleucine. The protein is tRNA(Ile)-lysidine synthase of Prochlorococcus marinus subsp. pastoris (strain CCMP1986 / NIES-2087 / MED4).